The sequence spans 351 residues: Translation initiation factor eIF2B subunit beta (351 aa).

The protein belongs to the eIF-2B alpha/beta/delta subunits family. In terms of assembly, component of the translation initiation factor 2B (eIF2B) complex which is a heterodecamer of two sets of five different subunits: alpha, beta, gamma, delta and epsilon. Subunits alpha, beta and delta comprise a regulatory subcomplex and subunits epsilon and gamma comprise a catalytic subcomplex. Within the complex, the hexameric regulatory complex resides at the center, with the two heterodimeric catalytic subcomplexes bound on opposite sides.

It is found in the cytoplasm. The protein resides in the cytosol. With respect to regulation, activated by the chemical integrated stress response (ISR) inhibitor ISRIB which stimulates guanine nucleotide exchange factor activity for both phosphorylated and unphosphorylated eIF2. Its function is as follows. Acts as a component of the translation initiation factor 2B (eIF2B) complex, which catalyzes the exchange of GDP for GTP on eukaryotic initiation factor 2 (eIF2) gamma subunit. Its guanine nucleotide exchange factor activity is repressed when bound to eIF2 complex phosphorylated on the alpha subunit, thereby limiting the amount of methionyl-initiator methionine tRNA available to the ribosome and consequently global translation is repressed. The sequence is that of Translation initiation factor eIF2B subunit beta (Eif2b2) from Rattus norvegicus (Rat).